The following is a 399-amino-acid chain: Succinate--CoA ligase [ADP-forming] subunit beta (399 aa).

Positions 9–254 (KAVLKSFGAP…TTEEDEKEIE (246 aa)) constitute an ATP-grasp domain. Residues Lys46, 53 to 55 (GRG), Glu109, Ala112, and Glu117 contribute to the ATP site. Mg(2+) contacts are provided by Asn209 and Asp223. Substrate is bound by residues Asn274 and 331-333 (GIM).

The protein belongs to the succinate/malate CoA ligase beta subunit family. As to quaternary structure, heterotetramer of two alpha and two beta subunits. Mg(2+) is required as a cofactor.

It carries out the reaction succinate + ATP + CoA = succinyl-CoA + ADP + phosphate. It catalyses the reaction GTP + succinate + CoA = succinyl-CoA + GDP + phosphate. The protein operates within carbohydrate metabolism; tricarboxylic acid cycle; succinate from succinyl-CoA (ligase route): step 1/1. Functionally, succinyl-CoA synthetase functions in the citric acid cycle (TCA), coupling the hydrolysis of succinyl-CoA to the synthesis of either ATP or GTP and thus represents the only step of substrate-level phosphorylation in the TCA. The beta subunit provides nucleotide specificity of the enzyme and binds the substrate succinate, while the binding sites for coenzyme A and phosphate are found in the alpha subunit. This Maricaulis maris (strain MCS10) (Caulobacter maris) protein is Succinate--CoA ligase [ADP-forming] subunit beta.